A 439-amino-acid polypeptide reads, in one-letter code: Ribosomal protein uS12 methylthiotransferase RimO (439 aa).

The region spanning K7–N119 is the MTTase N-terminal domain. [4Fe-4S] cluster contacts are provided by C16, C50, C82, C151, C155, and C158. Positions T137–K368 constitute a Radical SAM core domain.

Belongs to the methylthiotransferase family. RimO subfamily. [4Fe-4S] cluster serves as cofactor.

The protein localises to the cytoplasm. The enzyme catalyses L-aspartate(89)-[ribosomal protein uS12]-hydrogen + (sulfur carrier)-SH + AH2 + 2 S-adenosyl-L-methionine = 3-methylsulfanyl-L-aspartate(89)-[ribosomal protein uS12]-hydrogen + (sulfur carrier)-H + 5'-deoxyadenosine + L-methionine + A + S-adenosyl-L-homocysteine + 2 H(+). In terms of biological role, catalyzes the methylthiolation of an aspartic acid residue of ribosomal protein uS12. The polypeptide is Ribosomal protein uS12 methylthiotransferase RimO (Helicobacter pylori (strain HPAG1)).